We begin with the raw amino-acid sequence, 288 residues long: Homoserine kinase (288 aa).

78–88 (PLARGLGSSSS) is a binding site for ATP.

The protein belongs to the GHMP kinase family. Homoserine kinase subfamily.

It is found in the cytoplasm. The catalysed reaction is L-homoserine + ATP = O-phospho-L-homoserine + ADP + H(+). It participates in amino-acid biosynthesis; L-threonine biosynthesis; L-threonine from L-aspartate: step 4/5. Catalyzes the ATP-dependent phosphorylation of L-homoserine to L-homoserine phosphate. This is Homoserine kinase from Streptococcus agalactiae serotype V (strain ATCC BAA-611 / 2603 V/R).